The sequence spans 154 residues: MERKHMNVASFNLDHNAVKAPYVRLADKKIGSHGDVIYKYDIRVCQPNREQMLMPALHSLEHLLAELMRNHSDKILDISPMGCQTGFYISLLNEPDYQVMLHLLETTLNDILAAEAVPACCEEQCGFAANHSLSGAQEIARYLLAHRNKWEQVF.

3 residues coordinate Fe cation: His-58, His-62, and Cys-125.

The protein belongs to the LuxS family. In terms of assembly, homodimer. Requires Fe cation as cofactor.

The catalysed reaction is S-(5-deoxy-D-ribos-5-yl)-L-homocysteine = (S)-4,5-dihydroxypentane-2,3-dione + L-homocysteine. In terms of biological role, involved in the synthesis of autoinducer 2 (AI-2) which is secreted by bacteria and is used to communicate both the cell density and the metabolic potential of the environment. The regulation of gene expression in response to changes in cell density is called quorum sensing. Catalyzes the transformation of S-ribosylhomocysteine (RHC) to homocysteine (HC) and 4,5-dihydroxy-2,3-pentadione (DPD). This is S-ribosylhomocysteine lyase from Dichelobacter nodosus (strain VCS1703A).